The primary structure comprises 129 residues: Histone H2B.1 (129 aa).

A compositionally biased stretch (basic and acidic residues) spans 1–17 (MSAEKKPASKAPAEKKP). The tract at residues 1–35 (MSAEKKPASKAPAEKKPAAKKTAPSADGKKRTKAR) is disordered. 2 positions are modified to N6-acetyllysine; alternate: lysine 5 and lysine 6. Glycyl lysine isopeptide (Lys-Gly) (interchain with G-Cter in SUMO); alternate cross-links involve residues lysine 5 and lysine 6. Residue serine 9 is modified to Phosphoserine. Lysine 10 carries the N6-acetyllysine modification. Lysine 15 is modified (N6-acetyllysine; alternate). Lysine 15 is covalently cross-linked (Glycyl lysine isopeptide (Lys-Gly) (interchain with G-Cter in SUMO); alternate). Residue lysine 16 forms a Glycyl lysine isopeptide (Lys-Gly) (interchain with G-Cter in SUMO) linkage. Lysine 122 is covalently cross-linked (Glycyl lysine isopeptide (Lys-Gly) (interchain with G-Cter in ubiquitin)).

The protein belongs to the histone H2B family. In terms of assembly, the nucleosome is a histone octamer containing two molecules each of H2A, H2B, H3 and H4 assembled in one H3-H4 heterotetramer and two H2A-H2B heterodimers. The octamer wraps approximately 147 bp of DNA. In terms of processing, monoubiquitinated by the UBC2-BRE1 complex to form H2BK123ub1. H2BK123ub1 gives a specific tag for epigenetic transcriptional activation and is also prerequisite for H3K4me and H3K79me formation. H2BK123ub1 also modulates the formation of double-strand breaks during meiosis and is a prerequisite for DNA-damage checkpoint activation. Post-translationally, phosphorylated by STE20 to form H2BS10ph during progression through meiotic prophase. May be correlated with chromosome condensation. Acetylated by GCN5 to form H2BK11ac and H2BK16ac. H2BK16ac can also be formed by ESA1. Acetylation of N-terminal lysines and particularly formation of H2BK11acK16ac has a positive effect on transcription. In terms of processing, sumoylation to form H2BK6su or H2BK7su, and probably also H2BK16su or H2BK17su, occurs preferentially near the telomeres and represses gene transcription.

The protein resides in the nucleus. It localises to the chromosome. Core component of nucleosome. Nucleosomes wrap and compact DNA into chromatin, limiting DNA accessibility to the cellular machineries which require DNA as a template. Histones thereby play a central role in transcription regulation, DNA repair, DNA replication and chromosomal stability. DNA accessibility is regulated via a complex set of post-translational modifications of histones, also called histone code, and nucleosome remodeling. In Candida glabrata (strain ATCC 2001 / BCRC 20586 / JCM 3761 / NBRC 0622 / NRRL Y-65 / CBS 138) (Yeast), this protein is Histone H2B.1 (HTB1).